Reading from the N-terminus, the 1359-residue chain is ABC transporter C family member 1 (1359 aa).

Residues 111 to 394 (NKLTIFLQIL…LPNSIQQLQS (284 aa)) enclose the ABC transmembrane type-1 1 domain. A run of 6 helical transmembrane segments spans residues 119–139 (ILTN…IQFI), 147–167 (SFLA…SYTF), 214–234 (LLSV…MGIF), 244–264 (LALL…IMVI), 332–352 (MIFW…VLVL), and 363–383 (ITLE…IPLL). The disordered stretch occupies residues 409 to 478 (PEIQQNHSSN…QQQQQQQQQQ (70 aa)). Residues 420 to 433 (EEEEEDEYDDDINS) are compositionally biased toward acidic residues. Residues 440–450 (HNGSFNWNQVD) show a composition bias toward polar residues. Low complexity predominate over residues 459–478 (GNQQQQQQQQQQQQQQQQQQ). The region spanning 470-690 (QQQQQQQQQQ…IDFESIMKTK (221 aa)) is the ABC transporter 1 domain. Residue 502–509 (GVVGSGKT) coordinates ATP. The ABC transmembrane type-1 2 domain maps to 763-1061 (LRVYKEYFKH…LEVKMNSVER (299 aa)). 5 helical membrane-spanning segments follow: residues 773–793 (GSSI…QIIY), 819–839 (IYLL…FMMA), 884–904 (VDLL…TVLV), 906–926 (IGIM…LIGI), and 999–1021 (WVAV…FSLF). Residues 1073–1102 (NSKINFFRNEQQEEEEEEEEEFDFDNDDYD) are a coiled coil. The ABC transporter 2 domain maps to 1116 to 1350 (IEFRNVEIKY…QESRFSKLVK (235 aa)). Residue 1150-1157 (GRTGAGKS) coordinates ATP.

The protein belongs to the ABC transporter superfamily. ABCC family. Conjugate transporter (TC 3.A.1.208) subfamily.

Its subcellular location is the membrane. The protein is ABC transporter C family member 1 (abcC1) of Dictyostelium discoideum (Social amoeba).